Consider the following 228-residue polypeptide: Octanoyltransferase (228 aa).

The BPL/LPL catalytic domain occupies 32–214 (DVVPDTVLLV…HLRRLFERDW (183 aa)). Substrate contacts are provided by residues 77–84 (RGGDVTYH), 144–146 (SVG), and 157–159 (GIA). C175 acts as the Acyl-thioester intermediate in catalysis.

It belongs to the LipB family.

Its subcellular location is the cytoplasm. It catalyses the reaction octanoyl-[ACP] + L-lysyl-[protein] = N(6)-octanoyl-L-lysyl-[protein] + holo-[ACP] + H(+). Its pathway is protein modification; protein lipoylation via endogenous pathway; protein N(6)-(lipoyl)lysine from octanoyl-[acyl-carrier-protein]: step 1/2. Functionally, catalyzes the transfer of endogenously produced octanoic acid from octanoyl-acyl-carrier-protein onto the lipoyl domains of lipoate-dependent enzymes. Lipoyl-ACP can also act as a substrate although octanoyl-ACP is likely to be the physiological substrate. This Syntrophobacter fumaroxidans (strain DSM 10017 / MPOB) protein is Octanoyltransferase.